The chain runs to 666 residues: DNA ligase (666 aa).

Residues 31-35, 80-81, and E111 contribute to the NAD(+) site; these read DYDFD and SL. K113 (N6-AMP-lysine intermediate) is an active-site residue. Residues R134, E170, K285, and K309 each coordinate NAD(+). Residues C403, C406, C421, and C427 each contribute to the Zn(2+) site. Residues 587 to 666 form the BRCT domain; the sequence is VVSNKLLGKI…ESDFSALLTS (80 aa).

The protein belongs to the NAD-dependent DNA ligase family. LigA subfamily. The cofactor is Mg(2+). Mn(2+) serves as cofactor.

The catalysed reaction is NAD(+) + (deoxyribonucleotide)n-3'-hydroxyl + 5'-phospho-(deoxyribonucleotide)m = (deoxyribonucleotide)n+m + AMP + beta-nicotinamide D-nucleotide.. Its function is as follows. DNA ligase that catalyzes the formation of phosphodiester linkages between 5'-phosphoryl and 3'-hydroxyl groups in double-stranded DNA using NAD as a coenzyme and as the energy source for the reaction. It is essential for DNA replication and repair of damaged DNA. This is DNA ligase from Flavobacterium psychrophilum (strain ATCC 49511 / DSM 21280 / CIP 103535 / JIP02/86).